The following is a 318-amino-acid chain: Homoserine kinase (318 aa).

P97–C107 lines the ATP pocket.

It belongs to the GHMP kinase family. Homoserine kinase subfamily.

The protein resides in the cytoplasm. The catalysed reaction is L-homoserine + ATP = O-phospho-L-homoserine + ADP + H(+). It functions in the pathway amino-acid biosynthesis; L-threonine biosynthesis; L-threonine from L-aspartate: step 4/5. Catalyzes the ATP-dependent phosphorylation of L-homoserine to L-homoserine phosphate. The sequence is that of Homoserine kinase from Vibrio vulnificus (strain CMCP6).